Consider the following 119-residue polypeptide: Myohemerythrin-1 (119 aa).

The Fe cation site is built by H25, H55, N58, E59, H74, H78, H107, and D112.

The protein belongs to the hemerythrin family. As to quaternary structure, monomer. In terms of tissue distribution, muscle.

Its function is as follows. Myohemerythrin is an oxygen-binding protein found in the retractor muscles of certain worms. The oxygen-binding site contains two iron atoms. This chain is Myohemerythrin-1, found in Phascolopsis gouldii (Peanut worm).